The sequence spans 84 residues: Cell division topological specificity factor (84 aa).

The protein belongs to the MinE family.

In terms of biological role, prevents the cell division inhibition by proteins MinC and MinD at internal division sites while permitting inhibition at polar sites. This ensures cell division at the proper site by restricting the formation of a division septum at the midpoint of the long axis of the cell. This is Cell division topological specificity factor from Pseudomonas aeruginosa (strain LESB58).